The sequence spans 120 residues: Large ribosomal subunit protein eL8 (120 aa).

It belongs to the eukaryotic ribosomal protein eL8 family. Part of the 50S ribosomal subunit. Probably part of the RNase P complex.

It localises to the cytoplasm. In terms of biological role, multifunctional RNA-binding protein that recognizes the K-turn motif in ribosomal RNA, the RNA component of RNase P, box H/ACA, box C/D and box C'/D' sRNAs. This chain is Large ribosomal subunit protein eL8, found in Methanosarcina acetivorans (strain ATCC 35395 / DSM 2834 / JCM 12185 / C2A).